A 1078-amino-acid chain; its full sequence is Isoleucine--tRNA ligase (1078 aa).

The short motif at 52–62 (PTANGKPALHH) is the 'HIGH' region element. The 'KMSKS' region motif lies at 637–641 (KMSKS). Lys640 is a binding site for ATP.

It belongs to the class-I aminoacyl-tRNA synthetase family. IleS type 2 subfamily. As to quaternary structure, monomer. Zn(2+) is required as a cofactor.

The protein localises to the cytoplasm. It carries out the reaction tRNA(Ile) + L-isoleucine + ATP = L-isoleucyl-tRNA(Ile) + AMP + diphosphate. Its function is as follows. Catalyzes the attachment of isoleucine to tRNA(Ile). As IleRS can inadvertently accommodate and process structurally similar amino acids such as valine, to avoid such errors it has two additional distinct tRNA(Ile)-dependent editing activities. One activity is designated as 'pretransfer' editing and involves the hydrolysis of activated Val-AMP. The other activity is designated 'posttransfer' editing and involves deacylation of mischarged Val-tRNA(Ile). In Deinococcus radiodurans (strain ATCC 13939 / DSM 20539 / JCM 16871 / CCUG 27074 / LMG 4051 / NBRC 15346 / NCIMB 9279 / VKM B-1422 / R1), this protein is Isoleucine--tRNA ligase.